The following is a 1220-amino-acid chain: Deubiquitinating protein VCPIP1 (1220 aa).

The span at 1 to 19 (MSQPPPPPPLPPPPPPPEA) shows a compositional bias: pro residues. Residues 1 to 40 (MSQPPPPPPLPPPPPPPEAPQTSSSLAAAASPGGLSKRRD) form a disordered region. The segment covering 20 to 35 (PQTSSSLAAAASPGGL) has biased composition (low complexity). Residues 207–360 (LIPVHVDGDG…RNHYIPLVGI (154 aa)) form the OTU domain. Aspartate 215 is a catalytic residue. Cysteine 218 serves as the catalytic Nucleophile. Residue histidine 353 is part of the active site. Position 407 is an N6-acetyllysine (lysine 407). 2 disordered regions span residues 724–778 (SVMQ…KIRI) and 988–1008 (EATT…LGSG). Phosphoserine is present on residues serine 746 and serine 756. The segment covering 754–770 (PSSAPATPTKAPYSPTT) has biased composition (low complexity). Threonine 762 is modified (phosphothreonine). Residues serine 767, serine 993, serine 997, and serine 1076 each carry the phosphoserine modification. 2 disordered regions span residues 1113–1140 (SSIQ…QRKV) and 1185–1220 (FATR…MDHS). Serine 1196 and serine 1205 each carry phosphoserine. Positions 1197–1207 (MEEPEEMDSQD) are enriched in acidic residues. Residues 1208–1220 (AETTNTTEPMDHS) show a composition bias toward polar residues.

Binds VCP and the ternary complex containing STX5A, NSFL1C and VCP. Post-translationally, phosphorylated at Ser-1205 by ATM or ATR following induction of covalent DNA-protein cross-links (DPCs).

The protein localises to the nucleus. It is found in the cytoplasm. It localises to the endoplasmic reticulum. Its subcellular location is the golgi apparatus. The protein resides in the golgi stack. The enzyme catalyses Thiol-dependent hydrolysis of ester, thioester, amide, peptide and isopeptide bonds formed by the C-terminal Gly of ubiquitin (a 76-residue protein attached to proteins as an intracellular targeting signal).. Functionally, deubiquitinating enzyme involved in DNA repair and reassembly of the Golgi apparatus and the endoplasmic reticulum following mitosis. Necessary for VCP-mediated reassembly of Golgi stacks after mitosis. Plays a role in VCP-mediated formation of transitional endoplasmic reticulum (tER). Mediates dissociation of the ternary complex containing STX5A, NSFL1C and VCP. Also involved in DNA repair following phosphorylation by ATM or ATR: acts by catalyzing deubiquitination of SPRTN, thereby promoting SPRTN recruitment to chromatin and subsequent proteolytic cleavage of covalent DNA-protein cross-links (DPCs). Hydrolyzes 'Lys-11'- and 'Lys-48'-linked polyubiquitin chains. The chain is Deubiquitinating protein VCPIP1 from Mus musculus (Mouse).